Here is a 280-residue protein sequence, read N- to C-terminus: MNDLMRDLAPISAKAWAEIETEARGTLTVTLAARKVVDFKGPLGWDASSVSLGRTEALAEEPKAAGSAAVVTVRKRAVQPLIELCVPFTLKRAELEAIARGASDADLDPVIEAARAIAIAEDRAVFHGFAAGGITGIGEASAEHALDLPADLADFPGVLVRALAVLRDRGVDGPYALVLGRTVYQQLMETTTPGGYPVLQHVRRLFEGPLIWAPGVDGAMLISQRGGDFELTVGRDFSIGYHDHDAQSVHLYLQESMTFRCLGPEAAVPLRGLSQAATKA.

The protein belongs to the encapsulin family. Family 1 subfamily. As to quaternary structure, this encapsulin nanocompartment is formed by 60 subunits; monomers form pentamers which assemble to form shells. There are 12 pores where the pentamers meet as well as 3-fold axis channels and dimer channels; none are larger than 3-4 Angstroms in diameter. The N-terminus of the protein is inside the shell, the C-terminus is outside.

It is found in the encapsulin nanocompartment. Its function is as follows. Shell component of a type 1 encapsulin nanocompartment. Assembles into proteinaceous icosahedral shells 24 nm in diameter in the presence and absence of its ferritin cargo protein. The center of cargo-loaded nanocompartments is loaded with iron. The empty encapsulin nanocompartment sequesters about 2200 Fe ions while the cargo-loaded nanocompartment can maximally sequester about 4150 Fe ions. Does not have any detectable ferroxidase activity. The chain is Type 1 encapsulin shell protein from Rhodospirillum rubrum (strain ATCC 11170 / ATH 1.1.1 / DSM 467 / LMG 4362 / NCIMB 8255 / S1).